The primary structure comprises 284 residues: MIDFLDVQASTPDIRISVDKVGIRRMKFPIKIGDEVAILSADLYIDIPQTRKGADMSRAVESIQSVLSRPSINLESLGIEICKEALGRFNYASRVEVKINGEYYKKSNGGYDEISLYIRTKCGIDGNIENLTGLSYEAITACPCAMETTRALISKDIPDSENVLYYIPTVTHNQRNRTKLIVSNNAGKISFWDIYKVLESVQGKPLESLLKRIDEGKLVYEAHKKPKFVEDVVREVAFAAVTLLPLSDDDMVIVSSDSEESIHPHNAYASMKKRALDLKKELNL.

Belongs to the GTP cyclohydrolase IV family. Homodimer. Requires Fe(2+) as cofactor.

It carries out the reaction GTP + H2O = 7,8-dihydroneopterin 2',3'-cyclic phosphate + formate + diphosphate + H(+). It participates in cofactor biosynthesis; 5,6,7,8-tetrahydromethanopterin biosynthesis. Its function is as follows. Converts GTP to 7,8-dihydro-D-neopterin 2',3'-cyclic phosphate, the first intermediate in the biosynthesis of coenzyme methanopterin. In Thermoplasma volcanium (strain ATCC 51530 / DSM 4299 / JCM 9571 / NBRC 15438 / GSS1), this protein is GTP cyclohydrolase MptA.